We begin with the raw amino-acid sequence, 362 residues long: tRNA-specific 2-thiouridylase MnmA (362 aa).

ATP contacts are provided by residues 9 to 16 (GMSGGVDS) and methionine 35. Positions 95–97 (NPD) are interaction with target base in tRNA. The active-site Nucleophile is the cysteine 100. An intrachain disulfide couples cysteine 100 to cysteine 196. Residue glycine 124 participates in ATP binding. Positions 146-148 (KDQ) are interaction with tRNA. The Cysteine persulfide intermediate role is filled by cysteine 196. The interaction with tRNA stretch occupies residues 308 to 309 (RY).

The protein belongs to the MnmA/TRMU family.

It localises to the cytoplasm. It catalyses the reaction S-sulfanyl-L-cysteinyl-[protein] + uridine(34) in tRNA + AH2 + ATP = 2-thiouridine(34) in tRNA + L-cysteinyl-[protein] + A + AMP + diphosphate + H(+). Catalyzes the 2-thiolation of uridine at the wobble position (U34) of tRNA, leading to the formation of s(2)U34. The polypeptide is tRNA-specific 2-thiouridylase MnmA (Nitrosomonas europaea (strain ATCC 19718 / CIP 103999 / KCTC 2705 / NBRC 14298)).